Reading from the N-terminus, the 467-residue chain is Asparagine--tRNA ligase (467 aa).

Belongs to the class-II aminoacyl-tRNA synthetase family. In terms of assembly, homodimer.

Its subcellular location is the cytoplasm. It carries out the reaction tRNA(Asn) + L-asparagine + ATP = L-asparaginyl-tRNA(Asn) + AMP + diphosphate + H(+). This Baumannia cicadellinicola subsp. Homalodisca coagulata protein is Asparagine--tRNA ligase.